A 337-amino-acid chain; its full sequence is ADP-ribosylation factor GTPase-activating protein AGD12 (337 aa).

The Arf-GAP domain maps to 15–137; it reads KRRIRDLLTQ…EFLKPSLRIT (123 aa). The C4-type zinc finger occupies 30 to 53; it reads CADCGAPDPKWASANIGVFICLKC. The C2 domain occupies 164 to 281; it reads TNSSSQQPQL…AMAFGDPEMF (118 aa). Ca(2+) contacts are provided by D250, S253, and D256.

Ca(2+) serves as cofactor. In terms of tissue distribution, expressed in roots, leaves, flowers and siliques. Low levels of expression in seeds and stems.

It is found in the golgi apparatus. The protein resides in the cell membrane. In terms of biological role, GTPase-activating protein (GAP) for ADP ribosylation factor (ARF). Binds phosphatidylinositol 3-monophosohate (PI-3-P) and anionic phospholipids. The protein is ADP-ribosylation factor GTPase-activating protein AGD12 (AGD12) of Arabidopsis thaliana (Mouse-ear cress).